Here is a 173-residue protein sequence, read N- to C-terminus: Archaemetzincin (173 aa).

Position 130 (H130) interacts with Zn(2+). Residue E131 is the Proton acceptor of the active site. 6 residues coordinate Zn(2+): H134, H140, C141, C146, C165, and C168.

Belongs to the peptidase M54 family. In terms of assembly, monomer. Zn(2+) serves as cofactor.

Functionally, probable zinc metalloprotease whose natural substrate is unknown. The protein is Archaemetzincin of Natronomonas pharaonis (strain ATCC 35678 / DSM 2160 / CIP 103997 / JCM 8858 / NBRC 14720 / NCIMB 2260 / Gabara) (Halobacterium pharaonis).